A 265-amino-acid chain; its full sequence is Hemin import ATP-binding protein HmuV (265 aa).

An ABC transporter domain is found at 13 to 249 (LKASNLHLQL…TAVENVYGWP (237 aa)). ATP is bound at residue 45–52 (GPNGAGKS).

It belongs to the ABC transporter superfamily. Heme (hemin) importer (TC 3.A.1.14.5) family. The complex is composed of two ATP-binding proteins (HmuV), two transmembrane proteins (HmuU) and a solute-binding protein (HmuT).

The protein localises to the cell inner membrane. Part of the ABC transporter complex HmuTUV involved in hemin import. Responsible for energy coupling to the transport system. This is Hemin import ATP-binding protein HmuV from Photobacterium damsela subsp. piscicida (Pasteurella piscicida).